The sequence spans 489 residues: Cobyric acid synthase (489 aa).

Positions 251–444 (GLIIAVIRLP…LHGIFANDTF (194 aa)) constitute a GATase cobBQ-type domain. The active-site Nucleophile is cysteine 329. Histidine 436 is an active-site residue.

Belongs to the CobB/CobQ family. CobQ subfamily.

The protein operates within cofactor biosynthesis; adenosylcobalamin biosynthesis. Functionally, catalyzes amidations at positions B, D, E, and G on adenosylcobyrinic A,C-diamide. NH(2) groups are provided by glutamine, and one molecule of ATP is hydrogenolyzed for each amidation. This is Cobyric acid synthase from Chloroflexus aurantiacus (strain ATCC 29366 / DSM 635 / J-10-fl).